Reading from the N-terminus, the 89-residue chain is Small ribosomal subunit protein uS15 (89 aa).

It belongs to the universal ribosomal protein uS15 family. As to quaternary structure, part of the 30S ribosomal subunit. Forms a bridge to the 50S subunit in the 70S ribosome, contacting the 23S rRNA.

In terms of biological role, one of the primary rRNA binding proteins, it binds directly to 16S rRNA where it helps nucleate assembly of the platform of the 30S subunit by binding and bridging several RNA helices of the 16S rRNA. Functionally, forms an intersubunit bridge (bridge B4) with the 23S rRNA of the 50S subunit in the ribosome. The sequence is that of Small ribosomal subunit protein uS15 from Ruegeria sp. (strain TM1040) (Silicibacter sp.).